Reading from the N-terminus, the 405-residue chain is S-adenosylmethionine synthase (405 aa).

Histidine 22 is a binding site for ATP. A Mg(2+)-binding site is contributed by aspartate 24. Glutamate 50 is a K(+) binding site. Glutamate 63 and glutamine 107 together coordinate L-methionine. A flexible loop region spans residues 107–117; that stretch reads QSPDIAQGVNR. ATP-binding positions include 184 to 186, 250 to 251, aspartate 259, 265 to 266, alanine 282, and lysine 286; these read DGK, RF, and RK. An L-methionine-binding site is contributed by aspartate 259. Lysine 290 serves as a coordination point for L-methionine.

Belongs to the AdoMet synthase family. In terms of assembly, homotetramer; dimer of dimers. Mg(2+) is required as a cofactor. The cofactor is K(+).

It is found in the cytoplasm. The enzyme catalyses L-methionine + ATP + H2O = S-adenosyl-L-methionine + phosphate + diphosphate. The protein operates within amino-acid biosynthesis; S-adenosyl-L-methionine biosynthesis; S-adenosyl-L-methionine from L-methionine: step 1/1. Its function is as follows. Catalyzes the formation of S-adenosylmethionine (AdoMet) from methionine and ATP. The overall synthetic reaction is composed of two sequential steps, AdoMet formation and the subsequent tripolyphosphate hydrolysis which occurs prior to release of AdoMet from the enzyme. The protein is S-adenosylmethionine synthase of Roseiflexus castenholzii (strain DSM 13941 / HLO8).